Reading from the N-terminus, the 459-residue chain is uncharacterized protein (459 aa).

A TRAM domain is found at 6–64 (KNKQEKNIIITIKRLGINGEGIGYYKKKIIFIPGALPNEVVVAKIVDRHPHYLEGELVR). Residues Gln289, Tyr318, Glu339, and Asp387 each coordinate S-adenosyl-L-methionine. Residue Cys414 is the Nucleophile of the active site.

Belongs to the class I-like SAM-binding methyltransferase superfamily. RNA M5U methyltransferase family.

This is an uncharacterized protein from Lactobacillus johnsonii (strain CNCM I-12250 / La1 / NCC 533).